The primary structure comprises 328 residues: Phosphate acyltransferase (328 aa).

Belongs to the PlsX family. In terms of assembly, homodimer. Probably interacts with PlsY.

It is found in the cytoplasm. It catalyses the reaction a fatty acyl-[ACP] + phosphate = an acyl phosphate + holo-[ACP]. The protein operates within lipid metabolism; phospholipid metabolism. Its function is as follows. Catalyzes the reversible formation of acyl-phosphate (acyl-PO(4)) from acyl-[acyl-carrier-protein] (acyl-ACP). This enzyme utilizes acyl-ACP as fatty acyl donor, but not acyl-CoA. This Campylobacter jejuni (strain RM1221) protein is Phosphate acyltransferase.